A 252-amino-acid chain; its full sequence is Triosephosphate isomerase (252 aa).

Residue 10-12 (NWK) coordinates substrate. The active-site Electrophile is the His96. Glu168 functions as the Proton acceptor in the catalytic mechanism. Residues Gly174, Ser214, and 235-236 (GG) contribute to the substrate site.

This sequence belongs to the triosephosphate isomerase family. Homodimer.

It is found in the cytoplasm. It carries out the reaction D-glyceraldehyde 3-phosphate = dihydroxyacetone phosphate. It participates in carbohydrate biosynthesis; gluconeogenesis. Its pathway is carbohydrate degradation; glycolysis; D-glyceraldehyde 3-phosphate from glycerone phosphate: step 1/1. Functionally, involved in the gluconeogenesis. Catalyzes stereospecifically the conversion of dihydroxyacetone phosphate (DHAP) to D-glyceraldehyde-3-phosphate (G3P). In Streptococcus pyogenes serotype M6 (strain ATCC BAA-946 / MGAS10394), this protein is Triosephosphate isomerase.